A 384-amino-acid polypeptide reads, in one-letter code: Dual-specificity RNA methyltransferase RlmN (384 aa).

Residue E93 is the Proton acceptor of the active site. One can recognise a Radical SAM core domain in the interval 99 to 339 (EETRGTLCVS…TTIRKTRGDD (241 aa)). Cysteines 106 and 344 form a disulfide. Residues C113, C117, and C120 each contribute to the [4Fe-4S] cluster site. Residues 170–171 (GE), S202, 224–226 (SLH), and N301 each bind S-adenosyl-L-methionine. The active-site S-methylcysteine intermediate is the C344.

It belongs to the radical SAM superfamily. RlmN family. Requires [4Fe-4S] cluster as cofactor.

It localises to the cytoplasm. It carries out the reaction adenosine(2503) in 23S rRNA + 2 reduced [2Fe-2S]-[ferredoxin] + 2 S-adenosyl-L-methionine = 2-methyladenosine(2503) in 23S rRNA + 5'-deoxyadenosine + L-methionine + 2 oxidized [2Fe-2S]-[ferredoxin] + S-adenosyl-L-homocysteine. The catalysed reaction is adenosine(37) in tRNA + 2 reduced [2Fe-2S]-[ferredoxin] + 2 S-adenosyl-L-methionine = 2-methyladenosine(37) in tRNA + 5'-deoxyadenosine + L-methionine + 2 oxidized [2Fe-2S]-[ferredoxin] + S-adenosyl-L-homocysteine. Specifically methylates position 2 of adenine 2503 in 23S rRNA and position 2 of adenine 37 in tRNAs. m2A2503 modification seems to play a crucial role in the proofreading step occurring at the peptidyl transferase center and thus would serve to optimize ribosomal fidelity. The polypeptide is Dual-specificity RNA methyltransferase RlmN (Cupriavidus pinatubonensis (strain JMP 134 / LMG 1197) (Cupriavidus necator (strain JMP 134))).